A 186-amino-acid polypeptide reads, in one-letter code: MEKNNLKKILQEKMEKAIKVLGNELKGLRTGRASVNFLDSVTVEAYGSKVPLAQVASLSTPDARTINVQVWDKSMVSSVEKGITIANLGLTHATDGQLIRLPIPSLTEERRKEFVKLAHKYGEETKISLRNIRRDGIEELKKLEKDNIIVKDEYHSLSEQVQKLTDEYSSKVDSAIKQKEHEIMTV.

The protein belongs to the RRF family.

The protein resides in the cytoplasm. Functionally, responsible for the release of ribosomes from messenger RNA at the termination of protein biosynthesis. May increase the efficiency of translation by recycling ribosomes from one round of translation to another. The sequence is that of Ribosome-recycling factor from Rickettsia typhi (strain ATCC VR-144 / Wilmington).